Consider the following 262-residue polypeptide: Glutamate racemase (262 aa).

Substrate contacts are provided by residues 9–10 (DS) and 41–42 (YG). Cysteine 73 serves as the catalytic Proton donor/acceptor. Residue 74 to 75 (NT) participates in substrate binding. The active-site Proton donor/acceptor is the cysteine 180. 181-182 (TH) contacts substrate.

It belongs to the aspartate/glutamate racemases family.

The enzyme catalyses L-glutamate = D-glutamate. The protein operates within cell wall biogenesis; peptidoglycan biosynthesis. Its function is as follows. Provides the (R)-glutamate required for cell wall biosynthesis. The protein is Glutamate racemase of Aliivibrio fischeri (strain ATCC 700601 / ES114) (Vibrio fischeri).